A 496-amino-acid chain; its full sequence is Lysosomal Pro-X carboxypeptidase (496 aa).

The signal sequence occupies residues 1 to 21 (MGRRALLLLLLSFLAPWATIA). The propeptide occupies 22–45 (LRPALRALGSLHLPTNPTSLPAVA). N-linked (GlcNAc...) asparagine glycans are attached at residues Asn-47 and Asn-101. Catalysis depends on Ser-179, which acts as the Charge relay system. The SKS domain stretch occupies residues 194-334 (HMVVGALAAS…QNIFQALNVY (141 aa)). 4 disulfide bridges follow: Cys-215-Cys-372, Cys-233-Cys-310, Cys-264-Cys-343, and Cys-364-Cys-394. 3 N-linked (GlcNAc...) asparagine glycosylation sites follow: Asn-317, Asn-336, and Asn-345. Residue Asn-415 is glycosylated (N-linked (GlcNAc...) asparagine). Active-site charge relay system residues include Asp-430 and His-455.

Belongs to the peptidase S28 family. In terms of assembly, homodimer. Highest levels in placenta, lung and liver. Also present in heart, brain, pancreas and kidney.

It is found in the lysosome. The catalysed reaction is Cleavage of a -Pro-|-Xaa bond to release a C-terminal amino acid.. In terms of biological role, cleaves C-terminal amino acids linked to proline in peptides such as angiotensin II, III and des-Arg9-bradykinin. This cleavage occurs at acidic pH, but enzymatic activity is retained with some substrates at neutral pH. The chain is Lysosomal Pro-X carboxypeptidase (PRCP) from Homo sapiens (Human).